We begin with the raw amino-acid sequence, 464 residues long: Splicing factor 3A subunit 2 (464 aa).

Met-1 bears the N-acetylmethionine mark. The segment at 1 to 27 (MDFQHRPGGKTGSGGVASSSESNRDRR) is disordered. N6-acetyllysine is present on Lys-10. The Matrin-type zinc-finger motif lies at 54–84 (YECKLCLTLHNNEGSYLAHTQGKKHQTNLAR). Ser-153 is subject to Phosphoserine. 3 stretches are compositionally biased toward pro residues: residues 217–295 (PPAP…PVVH), 303–323 (PPAP…PGVH), and 331–369 (PPAP…PPPS). A disordered region spans residues 217 to 464 (PPAPPSLPAG…GNIPPPPPTN (248 aa)). Residues 370-392 (AGVHPQAPGVHPAAPAVHPQAPG) show a composition bias toward low complexity. Over residues 435-464 (VHPPTPMPPMLRPPLPSEGPGNIPPPPPTN) the composition is skewed to pro residues.

The protein belongs to the SF3A2 family. Component of the 17S U2 SnRNP complex, a ribonucleoprotein complex that contains small nuclear RNA (snRNA) U2 and a number of specific proteins. Part of the SF3A subcomplex of the 17S U2 SnRNP complex which is composed of three subunits; SF3A3/SAP61, SF3A2/SAP62 and SF3A1/SAP114. SF3A associates with the splicing factor SF3B and a 12S RNA unit to form the mature 17S U2 small nuclear ribonucleoprotein complex (17S U2 snRNP). Identified in the spliceosome 'E' complex, a precursor of the spliceosome 'A' complex. Identified in the spliceosome 'A' and 'B' complexes. Identified in the spliceosome 'C' complex. Interacts with HTATSF1.

The protein resides in the nucleus. Functionally, component of the 17S U2 SnRNP complex of the spliceosome, a large ribonucleoprotein complex that removes introns from transcribed pre-mRNAs. The 17S U2 SnRNP complex (1) directly participates in early spliceosome assembly and (2) mediates recognition of the intron branch site during pre-mRNA splicing by promoting the selection of the pre-mRNA branch-site adenosine, the nucleophile for the first step of splicing. Within the 17S U2 SnRNP complex, SF3A2 is part of the SF3A subcomplex that contributes to the assembly of the 17S U2 snRNP, and the subsequent assembly of the pre-spliceosome 'E' complex and the pre-catalytic spliceosome 'A' complex. Involved in pre-mRNA splicing as a component of pre-catalytic spliceosome 'B' complexes, including the Bact complex. Interacts directly with the duplex formed by U2 snRNA and the intron. In Homo sapiens (Human), this protein is Splicing factor 3A subunit 2 (SF3A2).